The primary structure comprises 689 residues: Glycine--tRNA ligase beta subunit (689 aa).

The protein belongs to the class-II aminoacyl-tRNA synthetase family. Tetramer of two alpha and two beta subunits.

It localises to the cytoplasm. The catalysed reaction is tRNA(Gly) + glycine + ATP = glycyl-tRNA(Gly) + AMP + diphosphate. This is Glycine--tRNA ligase beta subunit from Dictyoglomus turgidum (strain DSM 6724 / Z-1310).